The following is a 304-amino-acid chain: UDP-3-O-acyl-N-acetylglucosamine deacetylase (304 aa).

Residues His-78, His-237, and Asp-241 each coordinate Zn(2+). His-264 functions as the Proton donor in the catalytic mechanism.

It belongs to the LpxC family. The cofactor is Zn(2+).

It carries out the reaction a UDP-3-O-[(3R)-3-hydroxyacyl]-N-acetyl-alpha-D-glucosamine + H2O = a UDP-3-O-[(3R)-3-hydroxyacyl]-alpha-D-glucosamine + acetate. The protein operates within glycolipid biosynthesis; lipid IV(A) biosynthesis; lipid IV(A) from (3R)-3-hydroxytetradecanoyl-[acyl-carrier-protein] and UDP-N-acetyl-alpha-D-glucosamine: step 2/6. Catalyzes the hydrolysis of UDP-3-O-myristoyl-N-acetylglucosamine to form UDP-3-O-myristoylglucosamine and acetate, the committed step in lipid A biosynthesis. The polypeptide is UDP-3-O-acyl-N-acetylglucosamine deacetylase (Marinobacter nauticus (strain ATCC 700491 / DSM 11845 / VT8) (Marinobacter aquaeolei)).